Reading from the N-terminus, the 150-residue chain is Large ribosomal subunit protein bL9 (150 aa).

This sequence belongs to the bacterial ribosomal protein bL9 family.

In terms of biological role, binds to the 23S rRNA. The polypeptide is Large ribosomal subunit protein bL9 (Leuconostoc citreum (strain KM20)).